Here is a 1073-residue protein sequence, read N- to C-terminus: Carbamoyl phosphate synthase large chain (1073 aa).

The tract at residues 1 to 399 (MPKREDIKKV…SLLKAFKSLD (399 aa)) is carboxyphosphate synthetic domain. Residues arginine 129, arginine 169, glycine 175, glycine 176, glutamate 208, valine 210, glutamate 215, glycine 241, valine 242, histidine 243, glutamine 284, and glutamate 296 each contribute to the ATP site. The region spanning 133 to 325 (KETMLSIGEK…IARVTAKIAI (193 aa)) is the ATP-grasp 1 domain. Mg(2+) contacts are provided by glutamine 284, glutamate 296, and asparagine 298. Glutamine 284, glutamate 296, and asparagine 298 together coordinate Mn(2+). The segment at 400-540 (IDNQLGIKRW…YSTYEDTCET (141 aa)) is oligomerization domain. Residues 541–931 (NSTDKKKILI…YKAELAADNL (391 aa)) are carbamoyl phosphate synthetic domain. Residues 672 to 863 (YLLMQELGIP…LAKIAAKVIA (192 aa)) enclose the ATP-grasp 2 domain. ATP is bound by residues arginine 708, aspartate 747, leucine 749, glutamate 754, glycine 779, valine 780, histidine 781, serine 782, glutamine 822, and glutamate 834. Residues glutamine 822, glutamate 834, and asparagine 836 each coordinate Mg(2+). Mn(2+)-binding residues include glutamine 822, glutamate 834, and asparagine 836. Positions 930 to 1071 (NLLPLTGKVF…NEYHKEMEQK (142 aa)) constitute an MGS-like domain. Residues 932 to 1073 (LPLTGKVFLS…YHKEMEQKEE (142 aa)) are allosteric domain.

This sequence belongs to the CarB family. In terms of assembly, composed of two chains; the small (or glutamine) chain promotes the hydrolysis of glutamine to ammonia, which is used by the large (or ammonia) chain to synthesize carbamoyl phosphate. Tetramer of heterodimers (alpha,beta)4. It depends on Mg(2+) as a cofactor. Requires Mn(2+) as cofactor.

It carries out the reaction hydrogencarbonate + L-glutamine + 2 ATP + H2O = carbamoyl phosphate + L-glutamate + 2 ADP + phosphate + 2 H(+). The catalysed reaction is hydrogencarbonate + NH4(+) + 2 ATP = carbamoyl phosphate + 2 ADP + phosphate + 2 H(+). Its pathway is amino-acid biosynthesis; L-arginine biosynthesis; carbamoyl phosphate from bicarbonate: step 1/1. It participates in pyrimidine metabolism; UMP biosynthesis via de novo pathway; (S)-dihydroorotate from bicarbonate: step 1/3. Functionally, large subunit of the glutamine-dependent carbamoyl phosphate synthetase (CPSase). CPSase catalyzes the formation of carbamoyl phosphate from the ammonia moiety of glutamine, carbonate, and phosphate donated by ATP, constituting the first step of 2 biosynthetic pathways, one leading to arginine and/or urea and the other to pyrimidine nucleotides. The large subunit (synthetase) binds the substrates ammonia (free or transferred from glutamine from the small subunit), hydrogencarbonate and ATP and carries out an ATP-coupled ligase reaction, activating hydrogencarbonate by forming carboxy phosphate which reacts with ammonia to form carbamoyl phosphate. The protein is Carbamoyl phosphate synthase large chain of Methanosarcina mazei (strain ATCC BAA-159 / DSM 3647 / Goe1 / Go1 / JCM 11833 / OCM 88) (Methanosarcina frisia).